Reading from the N-terminus, the 83-residue chain is Neurotoxin LmNaTx34.5 (83 aa).

The N-terminal stretch at 1-15 (FILVVIALMVIEVKS) is a signal peptide. An LCN-type CS-alpha/beta domain is found at 16–82 (DGYLMVRAGR…IWTYEKNTCS (67 aa)). Intrachain disulfides connect C29–C81, C33–C54, C40–C61, and C44–C63.

It belongs to the long (4 C-C) scorpion toxin superfamily. Sodium channel inhibitor family. Beta subfamily. Expressed by the venom gland.

Its subcellular location is the secreted. Binds voltage-independently at site-4 of sodium channels (Nav) and shift the voltage of activation toward more negative potentials thereby affecting sodium channel activation and promoting spontaneous and repetitive firing. The protein is Neurotoxin LmNaTx34.5 of Lychas mucronatus (Chinese swimming scorpion).